Reading from the N-terminus, the 158-residue chain is SsrA-binding protein (158 aa).

A disordered region spans residues 131 to 158 (YDKRQTLRERQDKREADRAMSSHRRLGE).

The protein belongs to the SmpB family.

The protein localises to the cytoplasm. Its function is as follows. Required for rescue of stalled ribosomes mediated by trans-translation. Binds to transfer-messenger RNA (tmRNA), required for stable association of tmRNA with ribosomes. tmRNA and SmpB together mimic tRNA shape, replacing the anticodon stem-loop with SmpB. tmRNA is encoded by the ssrA gene; the 2 termini fold to resemble tRNA(Ala) and it encodes a 'tag peptide', a short internal open reading frame. During trans-translation Ala-aminoacylated tmRNA acts like a tRNA, entering the A-site of stalled ribosomes, displacing the stalled mRNA. The ribosome then switches to translate the ORF on the tmRNA; the nascent peptide is terminated with the 'tag peptide' encoded by the tmRNA and targeted for degradation. The ribosome is freed to recommence translation, which seems to be the essential function of trans-translation. This is SsrA-binding protein from Clavibacter michiganensis subsp. michiganensis (strain NCPPB 382).